The sequence spans 117 residues: UPF0122 protein Teth39_1278 (117 aa).

It belongs to the UPF0122 family.

Functionally, might take part in the signal recognition particle (SRP) pathway. This is inferred from the conservation of its genetic proximity to ftsY/ffh. May be a regulatory protein. The chain is UPF0122 protein Teth39_1278 from Thermoanaerobacter pseudethanolicus (strain ATCC 33223 / 39E) (Clostridium thermohydrosulfuricum).